Consider the following 508-residue polypeptide: Catalase (508 aa).

Positions 1–21 (MHMSKSFLLISMGLASISVHA) are cleaved as a signal peptide. Active-site residues include H72 and N145. Heme is bound at residue Y353. Residues 373-392 (PKSPVANHNQDGPSNNSTGL) show a composition bias toward polar residues. The interval 373 to 396 (PKSPVANHNQDGPSNNSTGLGNVD) is disordered.

It belongs to the catalase family. It depends on heme as a cofactor.

It localises to the periplasm. The enzyme catalyses 2 H2O2 = O2 + 2 H2O. Decomposes hydrogen peroxide into water and oxygen; serves to protect cells from the toxic effects of hydrogen peroxide. In Vibrio vulnificus (strain YJ016), this protein is Catalase.